A 297-amino-acid polypeptide reads, in one-letter code: UDP-3-O-acyl-N-acetylglucosamine deacetylase (297 aa).

His79, His238, and Asp242 together coordinate Zn(2+). Residue His265 is the Proton donor of the active site.

Belongs to the LpxC family. The cofactor is Zn(2+).

It carries out the reaction a UDP-3-O-[(3R)-3-hydroxyacyl]-N-acetyl-alpha-D-glucosamine + H2O = a UDP-3-O-[(3R)-3-hydroxyacyl]-alpha-D-glucosamine + acetate. It functions in the pathway glycolipid biosynthesis; lipid IV(A) biosynthesis; lipid IV(A) from (3R)-3-hydroxytetradecanoyl-[acyl-carrier-protein] and UDP-N-acetyl-alpha-D-glucosamine: step 2/6. Catalyzes the hydrolysis of UDP-3-O-myristoyl-N-acetylglucosamine to form UDP-3-O-myristoylglucosamine and acetate, the committed step in lipid A biosynthesis. This chain is UDP-3-O-acyl-N-acetylglucosamine deacetylase, found in Blochmanniella pennsylvanica (strain BPEN).